A 357-amino-acid chain; its full sequence is Cobalt-precorrin-5B C(1)-methyltransferase (357 aa).

This sequence belongs to the CbiD family.

It carries out the reaction Co-precorrin-5B + S-adenosyl-L-methionine = Co-precorrin-6A + S-adenosyl-L-homocysteine. It functions in the pathway cofactor biosynthesis; adenosylcobalamin biosynthesis; cob(II)yrinate a,c-diamide from sirohydrochlorin (anaerobic route): step 6/10. Its function is as follows. Catalyzes the methylation of C-1 in cobalt-precorrin-5B to form cobalt-precorrin-6A. The polypeptide is Cobalt-precorrin-5B C(1)-methyltransferase (Rhodospirillum rubrum (strain ATCC 11170 / ATH 1.1.1 / DSM 467 / LMG 4362 / NCIMB 8255 / S1)).